Reading from the N-terminus, the 170-residue chain is Adenine phosphoribosyltransferase (170 aa).

It belongs to the purine/pyrimidine phosphoribosyltransferase family. Homodimer.

The protein localises to the cytoplasm. The catalysed reaction is AMP + diphosphate = 5-phospho-alpha-D-ribose 1-diphosphate + adenine. The protein operates within purine metabolism; AMP biosynthesis via salvage pathway; AMP from adenine: step 1/1. Catalyzes a salvage reaction resulting in the formation of AMP, that is energically less costly than de novo synthesis. This Brevibacillus brevis (strain 47 / JCM 6285 / NBRC 100599) protein is Adenine phosphoribosyltransferase.